The chain runs to 322 residues: 4-hydroxythreonine-4-phosphate dehydrogenase (322 aa).

Positions 131 and 132 each coordinate substrate. A divalent metal cation is bound by residues His-161, His-206, and His-259. Lys-267, Asn-276, and Arg-285 together coordinate substrate.

This sequence belongs to the PdxA family. Homodimer. A divalent metal cation is required as a cofactor.

Its subcellular location is the cytoplasm. The catalysed reaction is 4-(phosphooxy)-L-threonine + NAD(+) = 3-amino-2-oxopropyl phosphate + CO2 + NADH. The protein operates within cofactor biosynthesis; pyridoxine 5'-phosphate biosynthesis; pyridoxine 5'-phosphate from D-erythrose 4-phosphate: step 4/5. Functionally, catalyzes the NAD(P)-dependent oxidation of 4-(phosphooxy)-L-threonine (HTP) into 2-amino-3-oxo-4-(phosphooxy)butyric acid which spontaneously decarboxylates to form 3-amino-2-oxopropyl phosphate (AHAP). The protein is 4-hydroxythreonine-4-phosphate dehydrogenase of Sulfurihydrogenibium sp. (strain YO3AOP1).